The sequence spans 523 residues: Arylsulfatase K (523 aa).

The signal sequence occupies residues 1–16 (MLRVFVLLIFNVNAYC). Ca(2+) contacts are provided by D35 and C75. C75 (nucleophile) is an active-site residue. C75 is subject to 3-oxoalanine (Cys). N-linked (GlcNAc...) asparagine glycosylation occurs at N103. Positions 123 and 246 each coordinate substrate. The N-linked (GlcNAc...) asparagine glycan is linked to N257. Ca(2+) contacts are provided by D308 and H309. A glycan (N-linked (GlcNAc...) asparagine) is linked at N405.

Belongs to the sulfatase family. Ca(2+) is required as a cofactor. Post-translationally, the conversion to 3-oxoalanine (also known as C-formylglycine, FGly), of a serine or cysteine residue in prokaryotes and of a cysteine residue in eukaryotes, is critical for catalytic activity.

Its subcellular location is the secreted. It is found in the lysosome. It carries out the reaction an aryl sulfate + H2O = a phenol + sulfate + H(+). The enzyme catalyses Hydrolysis of the 2-sulfate groups of the 2-O-sulfo-D-glucuronate residues of chondroitin sulfate, heparin and heparitin sulfate.. Its function is as follows. Catalyzes the hydrolysis of pseudosubstrates such as p-nitrocatechol sulfate and p-nitrophenyl sulfate. Catalyzes the hydrolysis of the 2-sulfate groups of the 2-O-sulfo-D-glucuronate residues of chondroitin sulfate, heparin and heparitin sulfate. Acts selectively on 2-sulfoglucuronate and lacks activity against 2-sulfoiduronate. This chain is Arylsulfatase K (arsk), found in Danio rerio (Zebrafish).